Reading from the N-terminus, the 246-residue chain is 3-deoxy-manno-octulosonate cytidylyltransferase (246 aa).

The protein belongs to the KdsB family.

The protein localises to the cytoplasm. It catalyses the reaction 3-deoxy-alpha-D-manno-oct-2-ulosonate + CTP = CMP-3-deoxy-beta-D-manno-octulosonate + diphosphate. The protein operates within nucleotide-sugar biosynthesis; CMP-3-deoxy-D-manno-octulosonate biosynthesis; CMP-3-deoxy-D-manno-octulosonate from 3-deoxy-D-manno-octulosonate and CTP: step 1/1. It participates in bacterial outer membrane biogenesis; lipopolysaccharide biosynthesis. Functionally, activates KDO (a required 8-carbon sugar) for incorporation into bacterial lipopolysaccharide in Gram-negative bacteria. This is 3-deoxy-manno-octulosonate cytidylyltransferase from Paramagnetospirillum magneticum (strain ATCC 700264 / AMB-1) (Magnetospirillum magneticum).